A 90-amino-acid chain; its full sequence is Antitoxin VapB35 (90 aa).

The tract at residues 53–90 (GSVQPARVHGPAPRPTIPMRGGLDSGTLLERMRAEERY) is disordered.

This sequence belongs to the phD/YefM antitoxin family.

In terms of biological role, antitoxin component of a type II toxin-antitoxin (TA) system. Neutralizes the effect of cognate toxin VapC35. The sequence is that of Antitoxin VapB35 (vapB35) from Mycobacterium tuberculosis (strain CDC 1551 / Oshkosh).